Consider the following 113-residue polypeptide: uncharacterized protein (113 aa).

Residues 49 to 91 (FFVVVGKEEYVVEGGFCTCPDFLVNLKGKSPCAHIIAVEVAKI) form an SWIM-type zinc finger.

This is an uncharacterized protein from Archaeoglobus fulgidus (strain ATCC 49558 / DSM 4304 / JCM 9628 / NBRC 100126 / VC-16).